The sequence spans 1483 residues: Chromosome partition protein MukB (1483 aa).

An ATP-binding site is contributed by 34 to 41; the sequence is GGNGAGKS. Coiled-coil stretches lie at residues 311–426 and 547–607; these read EMAR…LQRA and GQQV…WLAA. The interval 666-783 is flexible hinge; sequence PGGSEDARLN…KVPLFGRAAR (118 aa). 2 coiled-coil regions span residues 835 to 1115 and 1206 to 1266; these read EAAL…SAKA and DDPV…QAVS. The tract at residues 850–870 is disordered; sequence RELNNHESENQQQRQQYEQAK.

The protein belongs to the SMC family. MukB subfamily. Homodimerization via its hinge domain. Binds to DNA via its C-terminal region. Interacts, and probably forms a ternary complex, with MukE and MukF via its C-terminal region. The complex formation is stimulated by calcium or magnesium. Interacts with tubulin-related protein FtsZ.

The protein localises to the cytoplasm. It is found in the nucleoid. Functionally, plays a central role in chromosome condensation, segregation and cell cycle progression. Functions as a homodimer, which is essential for chromosome partition. Involved in negative DNA supercoiling in vivo, and by this means organize and compact chromosomes. May achieve or facilitate chromosome segregation by condensation DNA from both sides of a centrally located replisome during cell division. This chain is Chromosome partition protein MukB, found in Erwinia tasmaniensis (strain DSM 17950 / CFBP 7177 / CIP 109463 / NCPPB 4357 / Et1/99).